A 546-amino-acid polypeptide reads, in one-letter code: Choline oxidase (546 aa).

Residues 23-24, Glu-44, Trp-71, 90-92, 96-103, Ala-232, and Tyr-465 each bind FAD; these read SA, AKV, and CSSHNSCI. His-99 carries the post-translational modification Tele-8alpha-FAD histidine. The active-site Proton acceptor is His-466. FAD is bound by residues Ala-500 and 510 to 512; that span reads NPN.

Belongs to the GMC oxidoreductase family. Homodimer. FAD is required as a cofactor.

It catalyses the reaction choline + 2 O2 + H2O = glycine betaine + 2 H2O2 + H(+). The protein operates within amine and polyamine biosynthesis; betaine biosynthesis via choline pathway; betaine from choline: step 1/1. In terms of biological role, catalyzes the two-step oxidative conversion of choline to glycine-betaine with betaine aldehyde as an intermediate. Glycine-betaine accumulates to high levels in the cytoplasm of cells to prevent dehydration and plasmolysis in adverse hyperosmotic environments. Accepts either choline or the reaction intermediate betaine-aldehyde as substrate. The chain is Choline oxidase (codA) from Arthrobacter globiformis.